The chain runs to 479 residues: Probable periplasmic serine endoprotease DegP-like (479 aa).

Residues Met1–Ala27 form the signal peptide. Residues His118, Asp148, and Ser221 each act as charge relay system in the active site. Residues Gly219–Ser221 and Leu276–Ile280 contribute to the substrate site. PDZ domains follow at residues Leu265 to Gly356 and Lys362 to Gly468. Positions Met368–Arg390 are disordered.

It belongs to the peptidase S1C family.

It localises to the periplasm. It carries out the reaction Acts on substrates that are at least partially unfolded. The cleavage site P1 residue is normally between a pair of hydrophobic residues, such as Val-|-Val.. In terms of biological role, might be efficient in the degradation of transiently denatured and unfolded proteins which accumulate in the periplasm following stress conditions. This chain is Probable periplasmic serine endoprotease DegP-like, found in Pseudomonas fulva (strain 12-X).